The chain runs to 553 residues: Threonylcarbamoyladenosine tRNA methylthiotransferase (553 aa).

The disordered stretch occupies residues 21-61 (SAEDVKPQERYQNKKSVTVRAKKRVQIKPETDAEEKPTPRP). Basic and acidic residues-rich tracts occupy residues 23 to 32 (EDVKPQERYQ) and 47 to 58 (IKPETDAEEKPT). One can recognise an MTTase N-terminal domain in the interval 72-179 (QKVFVKTWGC…VVEVVEETLK (108 aa)). [4Fe-4S] cluster contacts are provided by Cys-81, Cys-116, Cys-145, Cys-221, Cys-225, and Cys-228. Positions 207-438 (RKNPLIEIIS…DLFYSYEPYA (232 aa)) constitute a Radical SAM core domain. The region spanning 438-500 (AQRVGEMYTV…KFSMVGEILD (63 aa)) is the TRAM domain. A helical transmembrane segment spans residues 533-553 (VGIALVVGSLAFLLQLLIRFL).

Belongs to the methylthiotransferase family. CDKAL1 subfamily. It depends on [4Fe-4S] cluster as a cofactor.

It is found in the membrane. It carries out the reaction N(6)-L-threonylcarbamoyladenosine(37) in tRNA + (sulfur carrier)-SH + AH2 + 2 S-adenosyl-L-methionine = 2-methylsulfanyl-N(6)-L-threonylcarbamoyladenosine(37) in tRNA + (sulfur carrier)-H + 5'-deoxyadenosine + L-methionine + A + S-adenosyl-L-homocysteine + 2 H(+). In terms of biological role, catalyzes the methylthiolation of N6-threonylcarbamoyladenosine (t(6)A), leading to the formation of 2-methylthio-N6-threonylcarbamoyladenosine (ms(2)t(6)A) at position 37 in tRNAs that read codons beginning with adenine. The sequence is that of Threonylcarbamoyladenosine tRNA methylthiotransferase from Drosophila pseudoobscura pseudoobscura (Fruit fly).